The primary structure comprises 525 residues: GMP synthase [glutamine-hydrolyzing] (525 aa).

Positions 9–207 (RILILDFGSQ…VLDICQCEAL (199 aa)) constitute a Glutamine amidotransferase type-1 domain. Cys86 functions as the Nucleophile in the catalytic mechanism. Active-site residues include His181 and Glu183. The 193-residue stretch at 208–400 (WTPATIIEDA…LGLPYDMLFR (193 aa)) folds into the GMPS ATP-PPase domain. An ATP-binding site is contributed by 235–241 (SGGVDSS).

Homodimer.

The enzyme catalyses XMP + L-glutamine + ATP + H2O = GMP + L-glutamate + AMP + diphosphate + 2 H(+). The protein operates within purine metabolism; GMP biosynthesis; GMP from XMP (L-Gln route): step 1/1. Its function is as follows. Catalyzes the synthesis of GMP from XMP. This chain is GMP synthase [glutamine-hydrolyzing], found in Serratia proteamaculans (strain 568).